Here is a 430-residue protein sequence, read N- to C-terminus: GTPase Obg (430 aa).

Positions 1-158 constitute an Obg domain; it reads MFVDQVTISL…LDVTLELKLL (158 aa). The disordered stretch occupies residues 118-145; the sequence is RGGRGGRGNSRFATPRNPAPDFSENGEP. In terms of domain architecture, OBG-type G spans 159 to 329; the sequence is ADVGLVGFPS…LLYAIADKLD (171 aa). Residues 165–172, 190–194, 212–215, 282–285, and 310–312 each bind GTP; these read GFPSVGKS, FTTIK, DLPG, NKMD, and STI. Mg(2+) contacts are provided by serine 172 and threonine 192. One can recognise an OCT domain in the interval 352–430; the sequence is KHTPSQDKFT…ILGGEFEFVE (79 aa).

The protein belongs to the TRAFAC class OBG-HflX-like GTPase superfamily. OBG GTPase family. In terms of assembly, monomer. It depends on Mg(2+) as a cofactor.

The protein resides in the cytoplasm. Functionally, an essential GTPase which binds GTP, GDP and possibly (p)ppGpp with moderate affinity, with high nucleotide exchange rates and a fairly low GTP hydrolysis rate. Plays a role in control of the cell cycle, stress response, ribosome biogenesis and in those bacteria that undergo differentiation, in morphogenesis control. This Staphylococcus haemolyticus (strain JCSC1435) protein is GTPase Obg.